Consider the following 129-residue polypeptide: MIRNVKKQRPVNLDLQTIRFPITAIASILHRVSGVITFIAVGILLWLLGTSLSSPEGFQQAADIMDGFIVKFIMWGILTALAYHVIVGIRHMLMDFGYLEETFEAGQRSAKISFVITVVLSLLAGVLVW.

The Cytoplasmic segment spans residues 1–26; it reads MIRNVKKQRPVNLDLQTIRFPITAIA. The helical transmembrane segment at 27–52 threads the bilayer; it reads SILHRVSGVITFIAVGILLWLLGTSL. Topologically, residues 53-68 are periplasmic; the sequence is SSPEGFQQAADIMDGF. The chain crosses the membrane as a helical span at residues 69–89; sequence IVKFIMWGILTALAYHVIVGI. Residue His84 coordinates heme. The Cytoplasmic portion of the chain corresponds to 90–108; that stretch reads RHMLMDFGYLEETFEAGQR. Residues 109–129 traverse the membrane as a helical segment; the sequence is SAKISFVITVVLSLLAGVLVW.

This sequence belongs to the cytochrome b560 family. Part of an enzyme complex containing four subunits: a flavoprotein, an iron-sulfur protein, plus two membrane-anchoring proteins, SdhC and SdhD. The complex can form homotrimers. Requires heme as cofactor.

It is found in the cell inner membrane. Its pathway is carbohydrate metabolism; tricarboxylic acid cycle. Membrane-anchoring subunit of succinate dehydrogenase (SDH). This chain is Succinate dehydrogenase cytochrome b556 subunit (sdhC), found in Salmonella typhi.